Here is a 906-residue protein sequence, read N- to C-terminus: Formin-like protein 16 (906 aa).

A signal peptide spans 1–28; sequence MAPAPSPTPLPLFLLLLLLVGVAPLAAA. The segment at 34–76 is disordered; sequence QTRFPSTRTPAFATPPPITSPSPSPGTPTATPSSSPPSSSGKR. Residues 46–59 are compositionally biased toward pro residues; that stretch reads ATPPPITSPSPSPG. The span at 60-73 shows a compositional bias: low complexity; sequence TPTATPSSSPPSSS. The helical transmembrane segment at 81 to 101 threads the bilayer; it reads VAVVSTALSSFAVSGLAFFLF. 6 disordered regions span residues 113–149, 161–223, 250–404, 451–474, 677–702, and 834–906; these read AGGA…VDEN, KEGD…SLDS, AYAR…DQQA, RKTK…GRSN, GSLA…REER, and LQQQ…SDEE. Over residues 114–128 the composition is skewed to gly residues; sequence GGAGQHYGGAQGGAL. Positions 174 to 185 are enriched in pro residues; it reads SRRPPQPPPPRP. Over residues 186–196 the composition is skewed to basic and acidic residues; that stretch reads YRAERRQDAHE. Positions 270–294 are enriched in pro residues; sequence SPSPAPAPAARPASPSPSLPLPPGR. A compositionally biased stretch (low complexity) spans 295-310; that stretch reads ESPSRPQSIAAAAVAS. Over residues 311–383 the composition is skewed to pro residues; that stretch reads PAPPPPPPPK…KGGPPPPPPK (73 aa). The FH2 domain occupies 396–849; it reads PTGSADQQAK…PTPPPSSSQP (454 aa). 2 stretches are compositionally biased toward polar residues: residues 463–474 and 677–697; these read GGSTSAGLGRSN and GSLA…SQGP. Over residues 847–866 the composition is skewed to low complexity; it reads SQPAAPAATTKGAADDAPAP.

The protein belongs to the formin-like family. Class-I subfamily.

Its subcellular location is the membrane. This is Formin-like protein 16 (FH16) from Oryza sativa subsp. japonica (Rice).